A 358-amino-acid polypeptide reads, in one-letter code: Protein RecA (358 aa).

Residue 67-74 (GPESSGKT) participates in ATP binding.

The protein belongs to the RecA family.

The protein localises to the cytoplasm. Can catalyze the hydrolysis of ATP in the presence of single-stranded DNA, the ATP-dependent uptake of single-stranded DNA by duplex DNA, and the ATP-dependent hybridization of homologous single-stranded DNAs. It interacts with LexA causing its activation and leading to its autocatalytic cleavage. This is Protein RecA from Xenorhabdus bovienii (Xenorhabdus nematophila subsp. bovienii).